Here is a 338-residue protein sequence, read N- to C-terminus: MTRF1L release factor glutamine methyltransferase (338 aa).

S-adenosyl-L-methionine is bound by residues 167 to 171, Asp-190, Trp-225, and Asn-239; that span reads GCGSG. Position 239-242 (239-242) interacts with substrate; that stretch reads NPPY.

It belongs to the protein N5-glutamine methyltransferase family.

It is found in the mitochondrion. It catalyses the reaction L-glutaminyl-[peptide chain release factor] + S-adenosyl-L-methionine = N(5)-methyl-L-glutaminyl-[peptide chain release factor] + S-adenosyl-L-homocysteine + H(+). Its function is as follows. N5-glutamine methyltransferase responsible for the methylation of the glutamine residue in the universally conserved GGQ motif of the mitochondrial translation release factors MTRF1, MTRF1L, MRPL58/ICT1 and MTRFR. The sequence is that of MTRF1L release factor glutamine methyltransferase (HEMK1) from Homo sapiens (Human).